The sequence spans 215 residues: N-(5'-phosphoribosyl)anthranilate isomerase (215 aa).

It belongs to the TrpF family.

The enzyme catalyses N-(5-phospho-beta-D-ribosyl)anthranilate = 1-(2-carboxyphenylamino)-1-deoxy-D-ribulose 5-phosphate. The protein operates within amino-acid biosynthesis; L-tryptophan biosynthesis; L-tryptophan from chorismate: step 3/5. The protein is N-(5'-phosphoribosyl)anthranilate isomerase of Pelodictyon phaeoclathratiforme (strain DSM 5477 / BU-1).